The sequence spans 1140 residues: Probable DNA-directed RNA polymerase II subunit RPB2 homolog (1140 aa).

Aspartate 773 lines the Mg(2+) pocket. Positions 1092, 1095, 1105, and 1108 each coordinate Zn(2+). The segment at 1092 to 1108 adopts a C4-type zinc-finger fold; sequence CKDCGMMSSTSKKCHHC.

Belongs to the RNA polymerase beta chain family.

It catalyses the reaction RNA(n) + a ribonucleoside 5'-triphosphate = RNA(n+1) + diphosphate. In terms of biological role, component of the DNA-dependent RNA polymerase that catalyzes the transcription of DNA into RNA using the four ribonucleoside triphosphates as substrates. Second largest component of RNA polymerase II which synthesizes mRNA precursors and many functional non-coding RNAs. Proposed to contribute to the polymerase catalytic activity and forms the polymerase active center together with the largest subunit. In Invertebrate iridescent virus 3 (IIV-3), this protein is Probable DNA-directed RNA polymerase II subunit RPB2 homolog.